A 226-amino-acid polypeptide reads, in one-letter code: Cysteine and histidine-rich domain-containing protein RAR1 (226 aa).

8 residues coordinate Zn(2+): cysteine 12, cysteine 17, cysteine 31, histidine 34, cysteine 49, cysteine 50, cysteine 66, and histidine 71. In terms of domain architecture, CHORD 1 spans 12 to 71 (CQRIGCNAMFTDDDNPQGSCQFHASGPFFHDGMKEWSCCKQRSHDFSLFLEIPGCKTGKH). The CCCH motif lies at 104-124 (CSRCRQGFFCSDHGSQPKEQI). Residues cysteine 159, cysteine 164, cysteine 178, histidine 181, cysteine 196, cysteine 197, cysteine 213, and histidine 218 each contribute to the Zn(2+) site. The CHORD 2 domain occupies 159–218 (CKNKGCGQTFKERDNHETACSHHPGPAVFHDRLRGWKCCDVHVKEFDEFMEIPPCTKGWH).

As to quaternary structure, interacts with HSP90-1, HSP90-2, SGT1A and SGT1B. Forms a ternary complex with SGT1A and barley HSP90.

Its function is as follows. Required specifically for plant innate immunity. Is essential for resistance conferred by multiple R genes recognizing different bacterial and oomycete pathogen isolates like avirulent P.syringae or H.parasitica (downy mildew). Contributes additively with SGT1B to RPP5-dependent resistance. Functions as a positive regulator of RPS5 accumulation by assisting its stabilization. May function as co-chaperone of HSP90-2 to positively regulate the steady-state accumulation of RPM1 and protect it from SGT1-mediated degradation. Acts as a negative regulator of pathogen-associated molecular pattern (PAMP)-triggered immunity. In Arabidopsis thaliana (Mouse-ear cress), this protein is Cysteine and histidine-rich domain-containing protein RAR1 (RAR1).